Reading from the N-terminus, the 263-residue chain is 5'-nucleotidase SurE (263 aa).

Positions 11, 12, 42, and 96 each coordinate a divalent metal cation.

The protein belongs to the SurE nucleotidase family. A divalent metal cation serves as cofactor.

The protein localises to the cytoplasm. The catalysed reaction is a ribonucleoside 5'-phosphate + H2O = a ribonucleoside + phosphate. Functionally, nucleotidase that shows phosphatase activity on nucleoside 5'-monophosphates. In Methanocorpusculum labreanum (strain ATCC 43576 / DSM 4855 / Z), this protein is 5'-nucleotidase SurE.